Here is a 404-residue protein sequence, read N- to C-terminus: Probable tRNA sulfurtransferase (404 aa).

In terms of domain architecture, THUMP spans 60-165; it reads QPIVEALKLV…DEAAYISYEE (106 aa). Residues 183 to 184, 208 to 209, R265, G287, and Q296 each bind ATP; these read ML and HF.

The protein belongs to the ThiI family.

It is found in the cytoplasm. It catalyses the reaction [ThiI sulfur-carrier protein]-S-sulfanyl-L-cysteine + a uridine in tRNA + 2 reduced [2Fe-2S]-[ferredoxin] + ATP + H(+) = [ThiI sulfur-carrier protein]-L-cysteine + a 4-thiouridine in tRNA + 2 oxidized [2Fe-2S]-[ferredoxin] + AMP + diphosphate. The enzyme catalyses [ThiS sulfur-carrier protein]-C-terminal Gly-Gly-AMP + S-sulfanyl-L-cysteinyl-[cysteine desulfurase] + AH2 = [ThiS sulfur-carrier protein]-C-terminal-Gly-aminoethanethioate + L-cysteinyl-[cysteine desulfurase] + A + AMP + 2 H(+). It functions in the pathway cofactor biosynthesis; thiamine diphosphate biosynthesis. In terms of biological role, catalyzes the ATP-dependent transfer of a sulfur to tRNA to produce 4-thiouridine in position 8 of tRNAs, which functions as a near-UV photosensor. Also catalyzes the transfer of sulfur to the sulfur carrier protein ThiS, forming ThiS-thiocarboxylate. This is a step in the synthesis of thiazole, in the thiamine biosynthesis pathway. The sulfur is donated as persulfide by IscS. This chain is Probable tRNA sulfurtransferase, found in Streptococcus pyogenes serotype M3 (strain ATCC BAA-595 / MGAS315).